We begin with the raw amino-acid sequence, 397 residues long: Elongation factor Tu (397 aa).

The tr-type G domain maps to 10-207 (KPHVNIGTIG…ACDSYIPEPQ (198 aa)). The interval 19 to 26 (GHIDHGKT) is G1. Position 19 to 26 (19 to 26 (GHIDHGKT)) interacts with GTP. Threonine 26 is a Mg(2+) binding site. The tract at residues 60-64 (GITIA) is G2. The tract at residues 81–84 (DCPG) is G3. Residues 81–85 (DCPGH) and 136–139 (NKCD) each bind GTP. The interval 136-139 (NKCD) is G4. A G5 region spans residues 174-176 (SAL).

This sequence belongs to the TRAFAC class translation factor GTPase superfamily. Classic translation factor GTPase family. EF-Tu/EF-1A subfamily. Monomer.

It localises to the cytoplasm. The catalysed reaction is GTP + H2O = GDP + phosphate + H(+). In terms of biological role, GTP hydrolase that promotes the GTP-dependent binding of aminoacyl-tRNA to the A-site of ribosomes during protein biosynthesis. The protein is Elongation factor Tu of Nitratidesulfovibrio vulgaris (strain ATCC 29579 / DSM 644 / CCUG 34227 / NCIMB 8303 / VKM B-1760 / Hildenborough) (Desulfovibrio vulgaris).